We begin with the raw amino-acid sequence, 130 residues long: Protein ApaG (130 aa).

Residues Ser3 to Arg127 form the ApaG domain.

The chain is Protein ApaG from Parvibaculum lavamentivorans (strain DS-1 / DSM 13023 / NCIMB 13966).